A 418-amino-acid chain; its full sequence is Elongation factor Tu, chloroplastic (418 aa).

Residues 10 to 214 (KPHVNIGTIG…NVDSYIPTPQ (205 aa)) form the tr-type G domain. Residues 19 to 26 (GHVDHGKT) form a G1 region. 19 to 26 (GHVDHGKT) is a binding site for GTP. Thr26 is a Mg(2+) binding site. Residues 60 to 64 (GITIN) form a G2 region. Positions 81 to 84 (DCPG) are G3. GTP is bound by residues 81–85 (DCPGH) and 136–139 (NKED). A G4 region spans residues 136-139 (NKED). The G5 stretch occupies residues 174-176 (SAL).

Belongs to the TRAFAC class translation factor GTPase superfamily. Classic translation factor GTPase family. EF-Tu/EF-1A subfamily.

It is found in the plastid. It localises to the chloroplast. The enzyme catalyses GTP + H2O = GDP + phosphate + H(+). Its function is as follows. GTP hydrolase that promotes the GTP-dependent binding of aminoacyl-tRNA to the A-site of ribosomes during protein biosynthesis. This is Elongation factor Tu, chloroplastic (tufA) from Chlamydomonas reinhardtii (Chlamydomonas smithii).